The following is a 403-amino-acid chain: Tyrosine--tRNA ligase (403 aa).

The short motif at 42–51 (PTAPDLHLGH) is the 'HIGH' region element. The 'KMSKS' region signature appears at 226 to 230 (KMSKS). ATP is bound at residue lysine 229. An S4 RNA-binding domain is found at 339–400 (LRIASLLTAA…GKRNFARVSL (62 aa)).

Belongs to the class-I aminoacyl-tRNA synthetase family. TyrS type 2 subfamily. In terms of assembly, homodimer.

The protein resides in the cytoplasm. It catalyses the reaction tRNA(Tyr) + L-tyrosine + ATP = L-tyrosyl-tRNA(Tyr) + AMP + diphosphate + H(+). Functionally, catalyzes the attachment of tyrosine to tRNA(Tyr) in a two-step reaction: tyrosine is first activated by ATP to form Tyr-AMP and then transferred to the acceptor end of tRNA(Tyr). In Xanthomonas oryzae pv. oryzae (strain MAFF 311018), this protein is Tyrosine--tRNA ligase.